The sequence spans 418 residues: Tyrosine--tRNA ligase (418 aa).

Residue tyrosine 34 participates in L-tyrosine binding. A 'HIGH' region motif is present at residues 39-48; that stretch reads PTADSLHLGH. Residues tyrosine 169 and glutamine 173 each coordinate L-tyrosine. Residues 229–233 carry the 'KMSKS' region motif; the sequence is KFGKS. An ATP-binding site is contributed by lysine 232. The S4 RNA-binding domain occupies 352–418; sequence HNIVELLVTA…GKKKYFVLTY (67 aa).

It belongs to the class-I aminoacyl-tRNA synthetase family. TyrS type 1 subfamily. As to quaternary structure, homodimer.

It is found in the cytoplasm. The catalysed reaction is tRNA(Tyr) + L-tyrosine + ATP = L-tyrosyl-tRNA(Tyr) + AMP + diphosphate + H(+). In terms of biological role, catalyzes the attachment of tyrosine to tRNA(Tyr) in a two-step reaction: tyrosine is first activated by ATP to form Tyr-AMP and then transferred to the acceptor end of tRNA(Tyr). This is Tyrosine--tRNA ligase from Streptococcus mutans serotype c (strain ATCC 700610 / UA159).